The chain runs to 620 residues: Probable potassium transport system protein Kup (620 aa).

Transmembrane regions (helical) follow at residues 11–31 (LAFL…LYAF), 51–71 (ILSL…LLLV), 100–120 (IAML…VITP), 138–158 (LAPY…AVQA), 167–187 (FFAP…AHAI), 202–222 (AVHF…LVVL), 246–266 (WFAL…AYLL), 288–308 (LILL…SGIF), 334–354 (GQIY…FVML), 364–384 (AAYG…LVLV), 396–416 (VVTI…STST), and 418–438 (LMEG…VMYI).

This sequence belongs to the HAK/KUP transporter (TC 2.A.72) family.

It localises to the cell inner membrane. The catalysed reaction is K(+)(in) + H(+)(in) = K(+)(out) + H(+)(out). Transport of potassium into the cell. Likely operates as a K(+):H(+) symporter. The polypeptide is Probable potassium transport system protein Kup (Vibrio cholerae serotype O1 (strain ATCC 39315 / El Tor Inaba N16961)).